The chain runs to 431 residues: Serine hydroxymethyltransferase 1 (431 aa).

(6S)-5,6,7,8-tetrahydrofolate is bound by residues Leu-127 and Gly-131–Leu-133. Residue Lys-236 is modified to N6-(pyridoxal phosphate)lysine. Residue Glu-252 participates in (6S)-5,6,7,8-tetrahydrofolate binding.

This sequence belongs to the SHMT family. Homodimer. It depends on pyridoxal 5'-phosphate as a cofactor.

The protein localises to the cytoplasm. The enzyme catalyses (6R)-5,10-methylene-5,6,7,8-tetrahydrofolate + glycine + H2O = (6S)-5,6,7,8-tetrahydrofolate + L-serine. Its pathway is one-carbon metabolism; tetrahydrofolate interconversion. It functions in the pathway amino-acid biosynthesis; glycine biosynthesis; glycine from L-serine: step 1/1. In terms of biological role, catalyzes the reversible interconversion of serine and glycine with tetrahydrofolate (THF) serving as the one-carbon carrier. This reaction serves as the major source of one-carbon groups required for the biosynthesis of purines, thymidylate, methionine, and other important biomolecules. Also exhibits THF-independent aldolase activity toward beta-hydroxyamino acids, producing glycine and aldehydes, via a retro-aldol mechanism. The chain is Serine hydroxymethyltransferase 1 from Rhizobium meliloti (strain 1021) (Ensifer meliloti).